Reading from the N-terminus, the 370-residue chain is MSLVQKIKEVEDEMARTQKNKATSFHLGVLKAKLAKYKRELLLGPSKGAAAGAGEGFDVSKAGDARVGLIGFPSVGKSTLLTKLTGTSSEVASYEFTTLTCIPGVINYKGAKIQLLDLPGIIEGAKDGKGRGRQVIAVGRTCNLILIVLDAMKPLVHKKIIERELDGFGIRLNKQPPPITFKKKEKGGINFSHTPNVNPTQLDSETVKAICAEYKIHNADVILRGNCTVDEFIDVIEGNRIYVPCIYVLNKIDAISIEELDLLDKIPHYVPISSHLEWNLDALLDKIWEYLKLIRVYTKPKGLIPDYNEPVVIRGGEEASIETFCNHIHNSIIRQFRYALVWGSSAKHNPQRCGKDHVLADEDIVQIVKK.

The region spanning 65 to 292 is the OBG-type G domain; sequence ARVGLIGFPS…LLDKIWEYLK (228 aa). GTP is bound by residues 71-78, 117-121, and 250-253; these read GFPSVGKS, DLPGI, and NKID. Positions 292–369 constitute a TGS domain; sequence KLIRVYTKPK…ADEDIVQIVK (78 aa).

The protein belongs to the TRAFAC class OBG-HflX-like GTPase superfamily. OBG GTPase family.

The sequence is that of Developmentally-regulated GTP-binding protein 1 homolog (drg1) from Dictyostelium discoideum (Social amoeba).